Reading from the N-terminus, the 595-residue chain is Elongation factor 4 (595 aa).

Residues 1–183 (MNVRNFSIIA…AIVERIPPPP (183 aa)) enclose the tr-type G domain. Residues 13–18 (DHGKST) and 130–133 (NKID) each bind GTP.

Belongs to the TRAFAC class translation factor GTPase superfamily. Classic translation factor GTPase family. LepA subfamily.

The protein resides in the cell membrane. The catalysed reaction is GTP + H2O = GDP + phosphate + H(+). Its function is as follows. Required for accurate and efficient protein synthesis under certain stress conditions. May act as a fidelity factor of the translation reaction, by catalyzing a one-codon backward translocation of tRNAs on improperly translocated ribosomes. Back-translocation proceeds from a post-translocation (POST) complex to a pre-translocation (PRE) complex, thus giving elongation factor G a second chance to translocate the tRNAs correctly. Binds to ribosomes in a GTP-dependent manner. The protein is Elongation factor 4 of Deinococcus geothermalis (strain DSM 11300 / CIP 105573 / AG-3a).